Consider the following 475-residue polypeptide: NAD-dependent histone deacetylase sir2 (475 aa).

Residues 1 to 12 (MASNPLDNNMPT) are compositionally biased toward polar residues. The tract at residues 1–35 (MASNPLDNNMPTTPVEEKIPVASYSPSSSGSSSGA) is disordered. Low complexity predominate over residues 20 to 35 (PVASYSPSSSGSSSGA). Residue Ser-55 is modified to Phosphoserine. The 298-residue stretch at 139-436 (KLPHFNTFED…AGWLNELQAL (298 aa)) folds into the Deacetylase sirtuin-type domain. NAD(+) is bound by residues 164 to 183 (GAGI…NGFY) and 246 to 249 (QNID). His-266 functions as the Proton acceptor in the catalytic mechanism. Zn(2+) contacts are provided by Cys-274, Cys-277, Cys-298, and Cys-301. Residues 373–375 (GTS), 398–400 (SRT), and Cys-416 each bind NAD(+).

It belongs to the sirtuin family. Class I subfamily. Zn(2+) serves as cofactor.

Its subcellular location is the nucleus. The protein localises to the chromosome. It localises to the centromere. The protein resides in the telomere. The enzyme catalyses N(6)-acetyl-L-lysyl-[protein] + NAD(+) + H2O = 2''-O-acetyl-ADP-D-ribose + nicotinamide + L-lysyl-[protein]. Its function is as follows. Involved in silencing within the mating-type region, at the telomeres, and according to PubMed:12867036 also within centromeric DNA regions. Required for the localization of swi6 to the telomeres, silent mating type region, and according to PubMed:12867036 to the centromeric DNA regions. According to PubMed:15545655 not required for the localization of swi6 to centromeric foci. Deacetylates histone H3 on 'Lys-9' and 'Lys-16' of histone H4. This has a direct role in heterochromatin assembly. The sequence is that of NAD-dependent histone deacetylase sir2 (sir2) from Schizosaccharomyces pombe (strain 972 / ATCC 24843) (Fission yeast).